Here is a 342-residue protein sequence, read N- to C-terminus: Probable long-chain-alcohol O-fatty-acyltransferase 3 (342 aa).

8 helical membrane-spanning segments follow: residues Ile-9 to Ile-29, Leu-36 to Val-56, Phe-58 to Ser-78, Ile-115 to Glu-135, Ile-153 to Gly-173, Met-227 to Phe-247, Thr-255 to Val-275, and Val-297 to Ile-317.

This sequence belongs to the wax synthase family.

It is found in the membrane. The catalysed reaction is a long chain fatty alcohol + a fatty acyl-CoA = a wax ester + CoA. Its function is as follows. Catalyzes the final step in the synthesis of long-chain linear esters (waxes). The sequence is that of Probable long-chain-alcohol O-fatty-acyltransferase 3 (AT3) from Arabidopsis thaliana (Mouse-ear cress).